We begin with the raw amino-acid sequence, 564 residues long: E3 ubiquitin-protein ligase RNF168 (564 aa).

Residues 16–55 (CGICMEILVEPVTLPCNHTLCNPCFQSTVEKANLCCPFCR) form an RING-type zinc finger. The residue at position 70 (Ser70) is a Phosphoserine. The LR motif 1 motif lies at 110-128 (LSKPGELRREYEEEISKVE). The residue at position 134 (Ser134) is a Phosphoserine. The short motif at 143–151 (EEYIQRLLA) is the UMI motif element. Disordered stretches follow at residues 149–179 (LLAE…EELA) and 193–291 (NILA…QGPE). Residues 157–179 (EKRRTERRRSEMEEQLRGDEELA) show a composition bias toward basic and acidic residues. Residues 168–191 (MEEQLRGDEELARRLSTSINSNYE) carry the MIU motif 1 motif. The residue at position 197 (Ser197) is a Phosphoserine. Lys210 participates in a covalent cross-link: Glycyl lysine isopeptide (Lys-Gly) (interchain with G-Cter in SUMO2). Positions 242 to 259 (KTEHGEDMCKSKETDSSD) are enriched in basic and acidic residues. The segment covering 275–288 (PTHSPQTCPETQGQ) has biased composition (polar residues). Residues Thr348 and Thr361 each carry the phosphothreonine modification. Phosphoserine occurs at positions 413 and 414. Positions 438–461 (RHKQEEQDRLLALQLQKEADKEKM) match the MIU motif 2 motif. Positions 455–564 (EADKEKMVPN…QKSILQMFQR (110 aa)) are disordered. Positions 465–476 (RQKGSPDQYQLR) match the LR motif 2 motif. Polar residues predominate over residues 466-480 (QKGSPDQYQLRTSSP). Ser469 is modified (phosphoserine). Positions 491–515 (NVKDRNSPKQTADRSKSQRSRKGEY) are enriched in basic and acidic residues. 2 stretches are compositionally biased toward polar residues: residues 519-531 (FEST…NGTK) and 555-564 (QKSILQMFQR). Lys524 is covalently cross-linked (Glycyl lysine isopeptide (Lys-Gly) (interchain with G-Cter in SUMO2)).

The protein belongs to the RNF168 family. Monomer. Interacts with UBE2N/UBC13. In terms of processing, sumoylated with SUMO1 by PIAS4 in response to double-strand breaks (DSBs). Ubiquitinated.

The protein localises to the nucleus. The catalysed reaction is S-ubiquitinyl-[E2 ubiquitin-conjugating enzyme]-L-cysteine + [acceptor protein]-L-lysine = [E2 ubiquitin-conjugating enzyme]-L-cysteine + N(6)-ubiquitinyl-[acceptor protein]-L-lysine.. It participates in protein modification; protein ubiquitination. Its function is as follows. E3 ubiquitin-protein ligase required for accumulation of repair proteins to sites of DNA damage. Acts with UBE2N/UBC13 to amplify the RNF8-dependent histone ubiquitination. Recruited to sites of DNA damage at double-strand breaks (DSBs) by binding to ubiquitinated histone H2A and H2AX and amplifies the RNF8-dependent H2A ubiquitination, promoting the formation of 'Lys-63'-linked ubiquitin conjugates. This leads to concentrate ubiquitinated histones H2A and H2AX at DNA lesions to the threshold required for recruitment of TP53BP1 and BRCA1. Also recruited at DNA interstrand cross-links (ICLs) sites and promotes accumulation of 'Lys-63'-linked ubiquitination of histones H2A and H2AX, leading to recruitment of FAAP20 and Fanconi anemia (FA) complex, followed by interstrand cross-link repair. H2A ubiquitination also mediates the ATM-dependent transcriptional silencing at regions flanking DSBs in cis, a mechanism to avoid collision between transcription and repair intermediates. Also involved in class switch recombination in immune system, via its role in regulation of DSBs repair. Following DNA damage, promotes the ubiquitination and degradation of JMJD2A/KDM4A in collaboration with RNF8, leading to unmask H4K20me2 mark and promote the recruitment of TP53BP1 at DNA damage sites. Not able to initiate 'Lys-63'-linked ubiquitination in vitro; possibly due to partial occlusion of the UBE2N/UBC13-binding region. Catalyzes monoubiquitination of 'Lys-13' and 'Lys-15' of nucleosomal histone H2A (H2AK13Ub and H2AK15Ub, respectively). The polypeptide is E3 ubiquitin-protein ligase RNF168 (Rattus norvegicus (Rat)).